A 365-amino-acid chain; its full sequence is MAEKEQPLKAVQVEALVVMKIIKHSTQLFPTTATGSLVGMDVRGTLEVTNAFPFPIVDIPADSHLDGAPANAAAAAPRAKSNAVYQSEMIKMLREVNIDANNVGWYTSANMGNFVNLNIIENQYFYQKELNERTVALVHDVSRSSQGALSLRAFRLSPQFMAAFKENKFTTENLQKSNLRYQDIFVELPVQIHNSHLLTSYLHQLPSPPPAENLDLPPSLAALTNDPLASSSLLTPNFDNLALSIDPFLEKNCDMLLESIETHHTENNNFQYYQRSLAREQTKIAAWQAKRKAENATRAQLKQPLLAEDEWQRLFKLPQEPSRLESMLNTRQVEQYSRQIDGFVSATTGKMFAVRGNLLPGETQV.

One can recognise an MPN domain in the interval Val11 to Phe160. Residues Tyr273–Gln303 are a coiled coil.

Belongs to the eIF-3 subunit H family. Component of the eukaryotic translation initiation factor 3 (eIF-3) complex.

It localises to the cytoplasm. In terms of biological role, component of the eukaryotic translation initiation factor 3 (eIF-3) complex, which is involved in protein synthesis of a specialized repertoire of mRNAs and, together with other initiation factors, stimulates binding of mRNA and methionyl-tRNAi to the 40S ribosome. The eIF-3 complex specifically targets and initiates translation of a subset of mRNAs involved in cell proliferation. This chain is Eukaryotic translation initiation factor 3 subunit H, found in Coccidioides immitis (strain RS) (Valley fever fungus).